Reading from the N-terminus, the 358-residue chain is Peptide chain release factor 1 (358 aa).

The residue at position 233 (Gln233) is an N5-methylglutamine.

It belongs to the prokaryotic/mitochondrial release factor family. Post-translationally, methylated by PrmC. Methylation increases the termination efficiency of RF1.

It localises to the cytoplasm. Functionally, peptide chain release factor 1 directs the termination of translation in response to the peptide chain termination codons UAG and UAA. The polypeptide is Peptide chain release factor 1 (Lachnoclostridium phytofermentans (strain ATCC 700394 / DSM 18823 / ISDg) (Clostridium phytofermentans)).